Consider the following 221-residue polypeptide: Thiopurine S-methyltransferase (221 aa).

S-adenosyl-L-methionine-binding residues include tryptophan 12, leucine 47, glutamate 68, and arginine 125.

The protein belongs to the class I-like SAM-binding methyltransferase superfamily. TPMT family.

The protein localises to the cytoplasm. It catalyses the reaction S-adenosyl-L-methionine + a thiopurine = S-adenosyl-L-homocysteine + a thiopurine S-methylether.. The protein is Thiopurine S-methyltransferase of Legionella pneumophila subsp. pneumophila (strain Philadelphia 1 / ATCC 33152 / DSM 7513).